A 140-amino-acid chain; its full sequence is uncharacterized protein (140 aa).

This is an uncharacterized protein from Sinorhizobium fredii (strain NBRC 101917 / NGR234).